An 828-amino-acid polypeptide reads, in one-letter code: Periplasmic nitrate reductase (828 aa).

Positions 1-32 (MNLSRRDFMKTNAAVAAAAVAGLAIPVKNVEA) form a signal peptide, tat-type signal. The 57-residue stretch at 38–94 (IKWDKAPCRFCGTGCSVLVGTQNGRVVASQGDPDADVNRGLNCIKGYFLPKIMYGKD) folds into the 4Fe-4S Mo/W bis-MGD-type domain. 4 residues coordinate [4Fe-4S] cluster: Cys45, Cys48, Cys52, and Cys80. Mo-bis(molybdopterin guanine dinucleotide)-binding positions include Lys82, Gln149, Asn174, Cys178, 211 to 218 (WGSNMAEM), 242 to 246 (STFEH), 261 to 263 (QSD), Met372, Gln376, Asn482, 508 to 509 (SD), Lys531, Asp558, and 718 to 727 (TGRVLEHWHT). Phe794 is a substrate binding site. Mo-bis(molybdopterin guanine dinucleotide)-binding residues include Asn802 and Lys819.

This sequence belongs to the prokaryotic molybdopterin-containing oxidoreductase family. NasA/NapA/NarB subfamily. As to quaternary structure, component of the periplasmic nitrate reductase NapAB complex composed of NapA and NapB. The cofactor is [4Fe-4S] cluster. Mo-bis(molybdopterin guanine dinucleotide) is required as a cofactor. Predicted to be exported by the Tat system. The position of the signal peptide cleavage has not been experimentally proven.

The protein localises to the periplasm. The enzyme catalyses 2 Fe(II)-[cytochrome] + nitrate + 2 H(+) = 2 Fe(III)-[cytochrome] + nitrite + H2O. Functionally, catalytic subunit of the periplasmic nitrate reductase complex NapAB. Receives electrons from NapB and catalyzes the reduction of nitrate to nitrite. In Pasteurella multocida (strain Pm70), this protein is Periplasmic nitrate reductase.